The sequence spans 179 residues: Large ribosomal subunit protein uL5 (179 aa).

It belongs to the universal ribosomal protein uL5 family. Part of the 50S ribosomal subunit; part of the 5S rRNA/L5/L18/L25 subcomplex. Contacts the 5S rRNA and the P site tRNA. Forms a bridge to the 30S subunit in the 70S ribosome.

Functionally, this is one of the proteins that bind and probably mediate the attachment of the 5S RNA into the large ribosomal subunit, where it forms part of the central protuberance. In the 70S ribosome it contacts protein S13 of the 30S subunit (bridge B1b), connecting the 2 subunits; this bridge is implicated in subunit movement. Contacts the P site tRNA; the 5S rRNA and some of its associated proteins might help stabilize positioning of ribosome-bound tRNAs. The polypeptide is Large ribosomal subunit protein uL5 (Citrobacter koseri (strain ATCC BAA-895 / CDC 4225-83 / SGSC4696)).